The primary structure comprises 320 residues: Cytochrome f (320 aa).

An N-terminal signal peptide occupies residues 1-35; it reads MQTRNAFSYIKEEITRSISVLLVIYIIIRAPISNA. Residues Tyr36, Cys56, Cys59, and His60 each coordinate heme. A helical membrane pass occupies residues 286-305; sequence VQGLLFFLASIIFAQIFLVL.

This sequence belongs to the cytochrome f family. The 4 large subunits of the cytochrome b6-f complex are cytochrome b6, subunit IV (17 kDa polypeptide, petD), cytochrome f and the Rieske protein, while the 4 small subunits are PetG, PetL, PetM and PetN. The complex functions as a dimer. Heme serves as cofactor.

The protein localises to the plastid. It is found in the chloroplast thylakoid membrane. In terms of biological role, component of the cytochrome b6-f complex, which mediates electron transfer between photosystem II (PSII) and photosystem I (PSI), cyclic electron flow around PSI, and state transitions. The protein is Cytochrome f of Lotus japonicus (Lotus corniculatus var. japonicus).